A 208-amino-acid chain; its full sequence is Component of Sp100-rs (208 aa).

The 116-residue stretch at 6–121 (GSPRMSTEQE…LRRSFECGAK (116 aa)) folds into the HSR domain.

The polypeptide is Component of Sp100-rs (Csprs) (Mus musculus (Mouse)).